The chain runs to 63 residues: MRYTDSRKLTPETDANHKTASPQPIRRISSQTLLGPDGKLIIDHDGQEYLLRKTQAGKLLLTK.

Residues 1-17 are compositionally biased toward basic and acidic residues; it reads MRYTDSRKLTPETDANH. The segment at 1-32 is disordered; that stretch reads MRYTDSRKLTPETDANHKTASPQPIRRISSQT. The span at 18–32 shows a compositional bias: polar residues; it reads KTASPQPIRRISSQT.

To Y.enterocolitica HemP.

This is an uncharacterized protein from Escherichia coli (strain K12).